The primary structure comprises 120 residues: Phosphoribosyl-AMP cyclohydrolase (120 aa).

D74 serves as a coordination point for Mg(2+). C75 contacts Zn(2+). Mg(2+)-binding residues include D76 and D78. Positions 91 and 98 each coordinate Zn(2+).

Belongs to the PRA-CH family. Homodimer. Mg(2+) serves as cofactor. Zn(2+) is required as a cofactor.

The protein resides in the cytoplasm. The enzyme catalyses 1-(5-phospho-beta-D-ribosyl)-5'-AMP + H2O = 1-(5-phospho-beta-D-ribosyl)-5-[(5-phospho-beta-D-ribosylamino)methylideneamino]imidazole-4-carboxamide. It functions in the pathway amino-acid biosynthesis; L-histidine biosynthesis; L-histidine from 5-phospho-alpha-D-ribose 1-diphosphate: step 3/9. In terms of biological role, catalyzes the hydrolysis of the adenine ring of phosphoribosyl-AMP. This chain is Phosphoribosyl-AMP cyclohydrolase, found in Natronomonas pharaonis (strain ATCC 35678 / DSM 2160 / CIP 103997 / JCM 8858 / NBRC 14720 / NCIMB 2260 / Gabara) (Halobacterium pharaonis).